The following is an 873-amino-acid chain: Bifunctional heparan sulfate N-deacetylase/N-sulfotransferase 3 (873 aa).

Over 1-13 the chain is Cytoplasmic; that stretch reads MSFIMKLHRHFQR. A helical; Signal-anchor for type II membrane protein membrane pass occupies residues 14–34; it reads TVILLATFCMVSIIISAYYLY. Residues 35-873 lie on the Lumenal side of the membrane; that stretch reads SGYKQENELS…WLRQELQKVR (839 aa). The tract at residues 36–589 is heparan sulfate N-deacetylase 3; it reads GYKQENELSE…KRHRDIWSKE (554 aa). Asn-146, Asn-226, Asn-342, and Asn-392 each carry an N-linked (GlcNAc...) asparagine glycan. Residues 590–873 form a heparan sulfate N-sulfotransferase 3 region; sequence KTCDRLPKFL…WLRQELQKVR (284 aa). The active-site For sulfotransferase activity is Lys-605. 605-609 is a binding site for 3'-phosphoadenylyl sulfate; that stretch reads KTGTT. A glycan (N-linked (GlcNAc...) asparagine) is linked at Asn-658. A 3'-phosphoadenylyl sulfate-binding site is contributed by Ser-703. Asn-794 carries N-linked (GlcNAc...) asparagine glycosylation. A disulfide bridge links Cys-809 with Cys-819. 3'-phosphoadenylyl sulfate is bound at residue 824-828; the sequence is KGRKY.

It belongs to the sulfotransferase 1 family. NDST subfamily. As to quaternary structure, monomer. Expressed in brain, kidney, liver, fetal and adult lung, adult pancreas, placenta, fetal spleen and fetal thymus. Not detected in adult/ fetal heart and skeletal muscle.

The protein localises to the golgi apparatus membrane. The enzyme catalyses alpha-D-glucosaminyl-[heparan sulfate](n) + 3'-phosphoadenylyl sulfate = N-sulfo-alpha-D-glucosaminyl-[heparan sulfate](n) + adenosine 3',5'-bisphosphate + 2 H(+). The protein operates within glycan metabolism; heparan sulfate biosynthesis. It functions in the pathway glycan metabolism; heparin biosynthesis. Its function is as follows. Essential bifunctional enzyme that catalyzes both the N-deacetylation and the N-sulfation of glucosamine (GlcNAc) of the glycosaminoglycan in heparan sulfate. Modifies the GlcNAc-GlcA disaccharide repeating sugar backbone to make N-sulfated heparosan, a prerequisite substrate for later modifications in heparin biosynthesis. Has high deacetylase activity but low sulfotransferase activity. The chain is Bifunctional heparan sulfate N-deacetylase/N-sulfotransferase 3 from Homo sapiens (Human).